Here is a 286-residue protein sequence, read N- to C-terminus: Glycine--tRNA ligase alpha subunit (286 aa).

The protein belongs to the class-II aminoacyl-tRNA synthetase family. In terms of assembly, tetramer of two alpha and two beta subunits.

It is found in the cytoplasm. The catalysed reaction is tRNA(Gly) + glycine + ATP = glycyl-tRNA(Gly) + AMP + diphosphate. This Thermotoga maritima (strain ATCC 43589 / DSM 3109 / JCM 10099 / NBRC 100826 / MSB8) protein is Glycine--tRNA ligase alpha subunit (glyQ).